A 437-amino-acid chain; its full sequence is RNA-binding motif, single-stranded-interacting protein 3 (437 aa).

A disordered region spans residues 28–57 (YAPAPHPMAPPSPSTNSSSNNSSNNSSGEQ). Residues 31–40 (APHPMAPPSP) are compositionally biased toward pro residues. Residues 41–54 (STNSSSNNSSNNSS) are compositionally biased toward low complexity. 2 RRM domains span residues 61 to 134 (TNLY…MAKQ) and 140 to 225 (TNLY…FADG). Residues 399-422 (TSPQTVAPSSQDTSGQQQQIAVDT) are compositionally biased toward polar residues. The segment at 399-437 (TSPQTVAPSSQDTSGQQQQIAVDTSNEHAPAYSYQQSKP) is disordered.

In terms of tissue distribution, expressed in fetal brain, fetal lung, fetal liver, heart, brain, placenta, lung, liver, muscle, kidney and pancreas.

Its subcellular location is the cytoplasm. Binds poly(A) and poly(U) oligoribonucleotides. The chain is RNA-binding motif, single-stranded-interacting protein 3 (RBMS3) from Homo sapiens (Human).